The chain runs to 117 residues: Ribosome-binding factor A (117 aa).

This sequence belongs to the RbfA family. Monomer. Binds 30S ribosomal subunits, but not 50S ribosomal subunits or 70S ribosomes.

It is found in the cytoplasm. Its function is as follows. One of several proteins that assist in the late maturation steps of the functional core of the 30S ribosomal subunit. Associates with free 30S ribosomal subunits (but not with 30S subunits that are part of 70S ribosomes or polysomes). Required for efficient processing of 16S rRNA. May interact with the 5'-terminal helix region of 16S rRNA. In Bacillus subtilis (strain 168), this protein is Ribosome-binding factor A.